A 101-amino-acid polypeptide reads, in one-letter code: NAD(P)H-quinone oxidoreductase subunit 4L, chloroplastic (101 aa).

The next 3 membrane-spanning stretches (helical) occupy residues 2–22 (ILEHVLVLSAYLFSIGIYGLI), 32–52 (MCLELILNAVNINFVTFSDFF), and 61–81 (IFSIFVIAIAAAEAAIGLAIV).

It belongs to the complex I subunit 4L family. NDH is composed of at least 16 different subunits, 5 of which are encoded in the nucleus.

Its subcellular location is the plastid. It localises to the chloroplast thylakoid membrane. It carries out the reaction a plastoquinone + NADH + (n+1) H(+)(in) = a plastoquinol + NAD(+) + n H(+)(out). The enzyme catalyses a plastoquinone + NADPH + (n+1) H(+)(in) = a plastoquinol + NADP(+) + n H(+)(out). Functionally, NDH shuttles electrons from NAD(P)H:plastoquinone, via FMN and iron-sulfur (Fe-S) centers, to quinones in the photosynthetic chain and possibly in a chloroplast respiratory chain. The immediate electron acceptor for the enzyme in this species is believed to be plastoquinone. Couples the redox reaction to proton translocation, and thus conserves the redox energy in a proton gradient. In Nicotiana sylvestris (Wood tobacco), this protein is NAD(P)H-quinone oxidoreductase subunit 4L, chloroplastic.